The primary structure comprises 448 residues: Binary larvicide subunit BinB (448 aa).

Positions 1–198 are beta-trefoil domain; it reads MCDSKDNSGV…TAFVNSSFYA (198 aa). Cysteine 67 and cysteine 161 are disulfide-bonded. Positions 199–448 are probable pore-forming domain; it reads AAIPQLPQTS…NEELIPKINQ (250 aa).

The protein belongs to the toxin_10 family. In terms of assembly, forms a heterodimer with BinA. Upon toxin crystal solubilization with NaOH at pH 12, only the 63-kDa (binB) and 43-kDa (binA) proteins were detected. Interacts with mosquito protein Cpm1 which acts as its host receptor. In terms of processing, processed by proteases extracted from C.pipiens larval gut; unlike its partner BinA, it does not form a stable digestion product.

It localises to the spore. Its subcellular location is the perispore. Component of a binary toxin active against Culex and some Aedes mosquito larvae. This subunit alone has no toxic larvicidal activity. This subunit is responsible for localized binding to specific regions of the host larval gut. Binary toxin internalization into host gut cells requires both proteins. The polypeptide is Binary larvicide subunit BinB (binB) (Lysinibacillus sphaericus (Bacillus sphaericus)).